Here is a 459-residue protein sequence, read N- to C-terminus: Protein BTN1 (459 aa).

Helical transmembrane passes span 37–57, 73–93, 102–122, 129–149, 167–187, 189–209, 240–260, 283–303, 325–342, 352–372, and 374–394; these read VSVVIAFWLFGLINNILYVLV, AVLLADVLPSFLTKLVAPYFI, IAVFVALSCAGMLVVAAAPVE, LLGVVLASLSSGGGELSFLGL, GAGLVGAGLYVVLTGWIGLGV, GSLLVGALLPSVMVVAFWGIL, VPAGAASAGLLAPGPSVAATA, ALFFPYMLPLLLVYVAEYTIN, YYPFYGFLYQLGVFISRS, LYLPSFLQVANLVLLTLHAVL, and FIPSVYLVFVVIFWEGLLGGA.

This sequence belongs to the battenin family.

It is found in the vacuole membrane. Involved in vacuolar transport and vacuole pH homeostasis. Also required for cytokinesis. The sequence is that of Protein BTN1 (BTN1) from Chaetomium globosum (strain ATCC 6205 / CBS 148.51 / DSM 1962 / NBRC 6347 / NRRL 1970) (Soil fungus).